The primary structure comprises 618 residues: UvrABC system protein C (618 aa).

The GIY-YIG domain maps to 13-92 (DKPGVYLMKN…IKKYRPKYNI (80 aa)). Positions 204-239 (LDIVENFKLNMERAAENLEFEKAAMLRDKINIIEKI) constitute a UVR domain.

It belongs to the UvrC family. Interacts with UvrB in an incision complex.

It localises to the cytoplasm. Functionally, the UvrABC repair system catalyzes the recognition and processing of DNA lesions. UvrC both incises the 5' and 3' sides of the lesion. The N-terminal half is responsible for the 3' incision and the C-terminal half is responsible for the 5' incision. This Clostridium botulinum (strain Langeland / NCTC 10281 / Type F) protein is UvrABC system protein C.